A 361-amino-acid polypeptide reads, in one-letter code: Chorismate synthase (361 aa).

Arginine 47 contributes to the NADP(+) binding site. FMN-binding positions include 124-126, glycine 286, 301-305, and arginine 327; these read RAS and KPTAT.

This sequence belongs to the chorismate synthase family. As to quaternary structure, homotetramer. FMNH2 serves as cofactor.

The enzyme catalyses 5-O-(1-carboxyvinyl)-3-phosphoshikimate = chorismate + phosphate. It participates in metabolic intermediate biosynthesis; chorismate biosynthesis; chorismate from D-erythrose 4-phosphate and phosphoenolpyruvate: step 7/7. In terms of biological role, catalyzes the anti-1,4-elimination of the C-3 phosphate and the C-6 proR hydrogen from 5-enolpyruvylshikimate-3-phosphate (EPSP) to yield chorismate, which is the branch point compound that serves as the starting substrate for the three terminal pathways of aromatic amino acid biosynthesis. This reaction introduces a second double bond into the aromatic ring system. This is Chorismate synthase from Prochlorococcus marinus (strain NATL1A).